We begin with the raw amino-acid sequence, 102 residues long: Vacuolar ATPase assembly integral membrane protein VMA21 homolog (102 aa).

Residues 1 to 33 (MTTSSSSEPSTMATLFPNFRDQEVQSAVKNLLT) are Cytoplasmic-facing. A helical transmembrane segment spans residues 34 to 54 (YSLVILIVPLASMFLLKQFFF). Over 55 to 67 (EGLLGVSANDALT) the chain is Lumenal. The chain crosses the membrane as a helical span at residues 68–88 (YSAIIAVVLVHVVLGIWLFAA). Topologically, residues 89 to 102 (TKQEDRKKRENKQD) are cytoplasmic.

Belongs to the VMA21 family.

It is found in the endoplasmic reticulum membrane. Its subcellular location is the endoplasmic reticulum-Golgi intermediate compartment membrane. The protein resides in the cytoplasmic vesicle. The protein localises to the COPII-coated vesicle membrane. Required for the assembly of the V0 complex of the vacuolar ATPase (V-ATPase) in the endoplasmic reticulum. This is Vacuolar ATPase assembly integral membrane protein VMA21 homolog from Caenorhabditis elegans.